A 447-amino-acid chain; its full sequence is Protein cortex (447 aa).

WD repeat units lie at residues 108–148 (TYSY…IGHG), 149–188 (FAEYEIQCCKFDPRGELLALGTYMKTLEIHNNSKSKKIMS), 198–237 (NMNCSITAVDWSPTGNSFAAGCSGGAVTSFTRAAKLISWR), 281–325 (DSDW…VRDT), 344–380 (GELVLSMWHSDRATLHPKTCSQLVVLSDPDTMVDQWG), and 384–423 (SGLDRVRTMIFSPDGTKLATATTDEDLIIWNFLPEDNKMK). The D-box signature appears at 384 to 395 (SGLDRVRTMIFS).

This sequence belongs to the WD repeat CORT family.

It localises to the cytoplasm. Controls wing pigmentation patterning by regulating scale cell development, thereby playing a key role in mimicry and crypsis. Probably acts as an activator of the anaphase promoting complex/cyclosome (APC/C) that promotes the ubiquitin ligase activity and substrate specificity of the APC/C. This is Protein cortex from Heliconius melpomene (Postman butterfly).